The primary structure comprises 157 residues: Methylamine utilization protein MauL (157 aa).

Its pathway is one-carbon metabolism; methylamine degradation. Its function is as follows. Probably involved in TTQ prosthetic group biosynthesis. This Methylobacillus flagellatus (strain ATCC 51484 / DSM 6875 / VKM B-1610 / KT) protein is Methylamine utilization protein MauL (mauL).